Reading from the N-terminus, the 461-residue chain is Cysteine--tRNA ligase (461 aa).

C28 contacts Zn(2+). A 'HIGH' region motif is present at residues 30-40 (ITIYDLCHIGH). Zn(2+) is bound by residues C209, H234, and E238. Residues 266–270 (KMSKS) carry the 'KMSKS' region motif. K269 serves as a coordination point for ATP.

Belongs to the class-I aminoacyl-tRNA synthetase family. Monomer. Requires Zn(2+) as cofactor.

It is found in the cytoplasm. It carries out the reaction tRNA(Cys) + L-cysteine + ATP = L-cysteinyl-tRNA(Cys) + AMP + diphosphate. The polypeptide is Cysteine--tRNA ligase (Yersinia pestis bv. Antiqua (strain Antiqua)).